The following is a 455-amino-acid chain: Bifunctional protein GlmU (455 aa).

Residues 1–226 (MSLDIVILAA…PMEVQGANDR (226 aa)) are pyrophosphorylase. Residues 8-11 (LAAG), K22, Q73, 78-79 (GT), 99-101 (YGD), G136, E151, N166, and N224 contribute to the UDP-N-acetyl-alpha-D-glucosamine site. D101 is a Mg(2+) binding site. N224 contributes to the Mg(2+) binding site. Residues 227-247 (RQLSELERHYQLREGRRLMAQ) form a linker region. The segment at 248 to 455 (GVTLRDPARF…WKRPEKIKKS (208 aa)) is N-acetyltransferase. The UDP-N-acetyl-alpha-D-glucosamine site is built by R330 and K348. H360 (proton acceptor) is an active-site residue. Residues Y363 and N374 each contribute to the UDP-N-acetyl-alpha-D-glucosamine site. Acetyl-CoA is bound by residues A377, 383–384 (NY), S402, A420, and R437.

The protein in the N-terminal section; belongs to the N-acetylglucosamine-1-phosphate uridyltransferase family. In the C-terminal section; belongs to the transferase hexapeptide repeat family. As to quaternary structure, homotrimer. Requires Mg(2+) as cofactor.

The protein resides in the cytoplasm. The catalysed reaction is alpha-D-glucosamine 1-phosphate + acetyl-CoA = N-acetyl-alpha-D-glucosamine 1-phosphate + CoA + H(+). The enzyme catalyses N-acetyl-alpha-D-glucosamine 1-phosphate + UTP + H(+) = UDP-N-acetyl-alpha-D-glucosamine + diphosphate. It functions in the pathway nucleotide-sugar biosynthesis; UDP-N-acetyl-alpha-D-glucosamine biosynthesis; N-acetyl-alpha-D-glucosamine 1-phosphate from alpha-D-glucosamine 6-phosphate (route II): step 2/2. The protein operates within nucleotide-sugar biosynthesis; UDP-N-acetyl-alpha-D-glucosamine biosynthesis; UDP-N-acetyl-alpha-D-glucosamine from N-acetyl-alpha-D-glucosamine 1-phosphate: step 1/1. Its pathway is bacterial outer membrane biogenesis; LPS lipid A biosynthesis. In terms of biological role, catalyzes the last two sequential reactions in the de novo biosynthetic pathway for UDP-N-acetylglucosamine (UDP-GlcNAc). The C-terminal domain catalyzes the transfer of acetyl group from acetyl coenzyme A to glucosamine-1-phosphate (GlcN-1-P) to produce N-acetylglucosamine-1-phosphate (GlcNAc-1-P), which is converted into UDP-GlcNAc by the transfer of uridine 5-monophosphate (from uridine 5-triphosphate), a reaction catalyzed by the N-terminal domain. This chain is Bifunctional protein GlmU, found in Pseudomonas entomophila (strain L48).